The following is a 157-amino-acid chain: Large ribosomal subunit protein mL59 (157 aa).

This sequence belongs to the mitochondrion-specific ribosomal protein mL59 family. In terms of assembly, component of the mitochondrial large ribosomal subunit (mt-LSU). Mature yeast 74S mitochondrial ribosomes consist of a small (37S) and a large (54S) subunit. The 37S small subunit contains a 15S ribosomal RNA (15S mt-rRNA) and 34 different proteins. The 54S large subunit contains a 21S rRNA (21S mt-rRNA) and 46 different proteins.

Its subcellular location is the mitochondrion. In terms of biological role, component of the mitochondrial ribosome (mitoribosome), a dedicated translation machinery responsible for the synthesis of mitochondrial genome-encoded proteins, including at least some of the essential transmembrane subunits of the mitochondrial respiratory chain. The mitoribosomes are attached to the mitochondrial inner membrane and translation products are cotranslationally integrated into the membrane. This chain is Large ribosomal subunit protein mL59 (MRPL25), found in Saccharomyces cerevisiae (strain ATCC 204508 / S288c) (Baker's yeast).